Reading from the N-terminus, the 284-residue chain is RNA polymerase sigma factor RpoH (284 aa).

Positions 54-123 (MVLAHLRFVV…IHEFILRNWR (70 aa)) are sigma-70 factor domain-2. Residues 78-81 (DLIQ) carry the Interaction with polymerase core subunit RpoC motif. The interval 229–280 (ALEGLDERSRDILQQRWLSEEKATLHDLAEKYNVSAERIRQLEKNAMSKLKG) is sigma-70 factor domain-4. Residues 253–272 (LHDLAEKYNVSAERIRQLEK) constitute a DNA-binding region (H-T-H motif).

The protein belongs to the sigma-70 factor family. RpoH subfamily. Interacts with the RNA polymerase core enzyme.

It is found in the cytoplasm. In terms of biological role, sigma factors are initiation factors that promote the attachment of RNA polymerase to specific initiation sites and are then released. This sigma factor is involved in regulation of expression of heat shock genes. This Pseudomonas aeruginosa (strain ATCC 15692 / DSM 22644 / CIP 104116 / JCM 14847 / LMG 12228 / 1C / PRS 101 / PAO1) protein is RNA polymerase sigma factor RpoH.